Consider the following 357-residue polypeptide: Poly(3-hydroxyalkanoate) polymerase subunit PhaE (357 aa).

Residues 320–357 (AALAGEEPATKPATALRSPAPAAKAPARRRTTKTNPAD) are disordered. The segment covering 331–344 (PATALRSPAPAAKA) has biased composition (low complexity).

The protein belongs to the PHA/PHB synthase family. Type III PhaE subfamily. As to quaternary structure, a large complex of PhaC and PhaE; the ratio of the subunits has been estimated to be from 1:1 to 4:1, with more PhaE than PhaC.

It is found in the cytoplasm. The protein operates within biopolymer metabolism; poly-(R)-3-hydroxybutanoate biosynthesis. Functionally, polymerizes D(-)-3-hydroxybutyryl-CoA to create polyhydroxybutyrate (PHB) which consists of thousands of hydroxybutyrate molecules linked end to end. This subunit has no catalytic activity but enhances the activity of PhaC, the catalytic subunit, 100-fold. This is Poly(3-hydroxyalkanoate) polymerase subunit PhaE from Allochromatium vinosum (strain ATCC 17899 / DSM 180 / NBRC 103801 / NCIMB 10441 / D) (Chromatium vinosum).